A 484-amino-acid chain; its full sequence is MSKPFLSLLSLSLLLFTSTCLATSSEFDRLNQCRLDNINALEPDHRVESEAGLTETWNPNHPELRCAGVSLIRRTIDPNGLHLPSYSPSPQLIYIIQGKGVIGLTLPGCPQTYQEPRSSQSRQGSRQQQPDSHQKIRRFRKGDIIAIPSGIPYWTYNNGDEPLVAISLLDTSNIANQLDSTPRVFYLVGNPEVEFPETQEEQQERHQQKHSLPVGRRGGQHQQEEESEEQKDGNSVLSGFSSEFLAHTFNTEEDTAKRLRSPRDKRNQIVRVEGGLRIINPEGQQEEEEEEEEEKQRSEQGRNGLEETICSLKIRENIAQPARADLYNPRAGSISTANSLTLPILRYLRLSAEYVRLYRNGIYAPHWNINANSLLYVIRGEGRVRIVNSQGNAVFDNKVTKGQLVVVPQNFVVAEQAGEEEGLEYLVFKTNDRAAVSHVQQVFRATPADVLANAFGLRQRQVTELKLSGNRGPLVHPQSQSQSN.

The signal sequence occupies residues 1–22; it reads MSKPFLSLLSLSLLLFTSTCLA. 2 cysteine pairs are disulfide-bonded: C33–C66 and C109–C310. The Cupin type-1 1 domain maps to 38–257; sequence INALEPDHRV…TFNTEEDTAK (220 aa). 3 disordered regions span residues 109–141, 196–236, and 275–304; these read CPQT…RFRK, PETQ…GNSV, and GLRI…GRNG. A compositionally biased stretch (low complexity) spans 117 to 129; it reads RSSQSRQGSRQQQ. Positions 284–293 are enriched in acidic residues; that stretch reads QQEEEEEEEE. The 148-residue stretch at 316–463 folds into the Cupin type-1 2 domain; sequence ENIAQPARAD…AFGLRQRQVT (148 aa).

The protein belongs to the 11S seed storage protein (globulins) family. As to quaternary structure, hexamer; each subunit is composed of an acidic and a basic chain derived from a single precursor and linked by a disulfide bond.

Its function is as follows. This protein found in the seeds of many leguminous and non-leguminous plants is the source of sulfur-containing amino acids in seed meals. In Vicia faba (Broad bean), this protein is Legumin type B (LEB4).